The sequence spans 337 residues: ELAV-like protein 1-A (337 aa).

3 consecutive RRM domains span residues 20–109 (TNLI…FARP), 117–197 (ANLY…FAAN), and 255–333 (WCIF…FKTS).

It belongs to the RRM elav family. Interacts (via RRM3) with cirbp. Unable to form oligomers. Part of a ribonucleoprotein (RNP) complex, at least composed of elavl1/elrA and/or elavl2/elrB, igf2bp3/vg1RBP, ddx6/Xp54, ybx2/frgy2, lsm14b/rap55b and, in a subset of RNP complexes, stau1/staufen. In terms of tissue distribution, ubiquitously expressed in adults.

The protein localises to the cytoplasm. The protein resides in the cell cortex. Its function is as follows. RNA-binding protein that binds to the 3'-UTR region of mRNAs and increases their stability. Involved in embryonic stem cells (ESCs) differentiation: preferentially binds mRNAs that are not methylated by N6-methyladenosine (m6A), stabilizing them, promoting ESCs differentiation. Binds to poly-U elements and AU-rich elements (AREs) in the 3'-UTR of target mRNAs. May be involved in cytoplasmic mRNA polyadenylation. Acts cooperatively with cribp to stabilize AU-rich sequence (ARE)-containing mRNAs. May play a role during gastrulation. Required for the vegetal localization of vg1 mRNA. The chain is ELAV-like protein 1-A (elavl1-a) from Xenopus laevis (African clawed frog).